Here is a 100-residue protein sequence, read N- to C-terminus: Osteocalcin (100 aa).

A signal peptide spans 1-23 (MRTPMLLALLALATLCLAGRADA). A propeptide spanning residues 24–51 (KPGDAESGKGAAFVSKQEGSEVVKRLRR) is cleaved from the precursor. Residues 52-98 (YLDHWLGAPAPYPDPLEPKREVCELNPDCDELADHIGFQEAYRRFYG) enclose the Gla domain. Pro60 carries the post-translational modification 4-hydroxyproline. 4 residues coordinate Ca(2+): Glu68, Glu72, Glu75, and Asp81. Residues Glu68, Glu72, and Glu75 each carry the 4-carboxyglutamate modification. Cys74 and Cys80 are oxidised to a cystine.

This sequence belongs to the osteocalcin/matrix Gla protein family. Gamma-carboxyglutamate residues are formed by vitamin K dependent carboxylation by GGCX. These residues are essential for the binding of calcium. Decarboxylation promotes the hormone activity.

It localises to the secreted. Its function is as follows. The carboxylated form is one of the main organic components of the bone matrix, which constitutes 1-2% of the total bone protein. It acts as a negative regulator of bone formation and is required to limit bone formation without impairing bone resorption or mineralization. The carboxylated form binds strongly to apatite and calcium. Functionally, the uncarboxylated form acts as a hormone secreted by osteoblasts, which regulates different cellular processes, such as energy metabolism, male fertility and brain development. Regulates of energy metabolism by acting as a hormone favoring pancreatic beta-cell proliferation, insulin secretion and sensitivity and energy expenditure. Uncarboxylated osteocalcin hormone also promotes testosterone production in the testes: acts as a ligand for G protein-coupled receptor GPRC6A at the surface of Leydig cells, initiating a signaling response that promotes the expression of enzymes required for testosterone synthesis in a CREB-dependent manner. Also acts as a regulator of brain development: osteocalcin hormone crosses the blood-brain barrier and acts as a ligand for GPR158 on neurons, initiating a signaling response that prevents neuronal apoptosis in the hippocampus, favors the synthesis of all monoamine neurotransmitters and inhibits that of gamma-aminobutyric acid (GABA). Osteocalcin also crosses the placenta during pregnancy and maternal osteocalcin is required for fetal brain development. This is Osteocalcin (BGLAP) from Bos taurus (Bovine).